A 562-amino-acid polypeptide reads, in one-letter code: Lamassu protein LmuB (562 aa).

Its function is as follows. Component of antiviral defense system Lamassu type I, composed of LmuA and LmuB. Expression of Lamassu type I in B.subtilis (strain BEST7003) confers resistance to phages phi3T, SpBeta and SPR. May be an ATPase. The protein is Lamassu protein LmuB of Bacillus sp. (strain NCIM 5461 / CCTCC AB 2011126 / NIO-1130).